The primary structure comprises 542 residues: Malate synthase, glyoxysomal (542 aa).

The active-site Proton acceptor is Arg168. Asp449 (proton donor) is an active-site residue. The short motif at 540-542 (SKL) is the Microbody targeting signal element.

The protein belongs to the malate synthase family.

Its subcellular location is the glyoxysome. It catalyses the reaction glyoxylate + acetyl-CoA + H2O = (S)-malate + CoA + H(+). The protein operates within carbohydrate metabolism; glyoxylate cycle; (S)-malate from isocitrate: step 2/2. The sequence is that of Malate synthase, glyoxysomal (acu-9) from Neurospora crassa (strain ATCC 24698 / 74-OR23-1A / CBS 708.71 / DSM 1257 / FGSC 987).